A 479-amino-acid polypeptide reads, in one-letter code: Anaerobic nitric oxide reductase flavorubredoxin (479 aa).

The interval 30–210 (LRGSSYNSYL…PFSRLVTPKI (181 aa)) is zinc metallo-hydrolase. The Fe cation site is built by H79, E81, D83, H147, D166, and H227. One can recognise a Flavodoxin-like domain in the interval 254 to 393 (ITIFYDTMSN…LCREHGREIA (140 aa)). FMN is bound by residues 260–264 (TMSNN) and 342–369 (AFGS…EMSL). One can recognise a Rubredoxin-like domain in the interval 423–474 (GPRMQCSVCQWIYDPAKGEPMQDVAPGTPWSEVPDNFLCPECSLGKDVFEEL). Residues C428, C431, C461, and C464 each contribute to the Fe cation site.

The protein in the N-terminal section; belongs to the zinc metallo-hydrolase group 3 family. As to quaternary structure, homotetramer. It depends on Fe cation as a cofactor. The cofactor is FMN.

The protein localises to the cytoplasm. Its pathway is nitrogen metabolism; nitric oxide reduction. Functionally, anaerobic nitric oxide reductase; uses NADH to detoxify nitric oxide (NO), protecting several 4Fe-4S NO-sensitive enzymes. Has at least 2 reductase partners, only one of which (NorW, flavorubredoxin reductase) has been identified. NO probably binds to the di-iron center; electrons enter from the NorW at rubredoxin and are transferred sequentially to the FMN center and the di-iron center. Also able to function as an aerobic oxygen reductase. In Shigella dysenteriae serotype 1 (strain Sd197), this protein is Anaerobic nitric oxide reductase flavorubredoxin.